Here is a 130-residue protein sequence, read N- to C-terminus: Small ribosomal subunit protein uS9 (130 aa).

This sequence belongs to the universal ribosomal protein uS9 family.

The protein is Small ribosomal subunit protein uS9 of Exiguobacterium sp. (strain ATCC BAA-1283 / AT1b).